Consider the following 391-residue polypeptide: Mycofactocin maturase MftC (391 aa).

The Radical SAM core domain occupies 16–232; it reads LDAPICLTWE…KGERVLTGDS (217 aa). Residues Cys-30, Cys-34, Cys-37, Cys-251, Cys-258, Cys-269, Cys-310, Cys-313, Cys-319, Cys-323, and Cys-341 each coordinate [4Fe-4S] cluster. Residues 340–391 are disordered; that stretch reads ECVQGHSEPALARERHLPRPRADHSRGRRVSKPVPLTLSMRPPKRPCNESPV. Residues 350–364 show a composition bias toward basic and acidic residues; sequence LARERHLPRPRADHS.

The protein belongs to the radical SAM superfamily. [4Fe-4S] cluster is required as a cofactor.

It carries out the reaction [mycofactocin precursor peptide]-C-terminal glycyl-L-valyl-L-tyrosine + S-adenosyl-L-methionine = [mycofactocin precursor peptide]-C-terminal glycyl-N-{[2-(4-hydroxyphenyl)ethenyl]-3-methylbutanamide} + 5'-deoxyadenosine + L-methionine + CO2. The enzyme catalyses [mycofactocin precursor peptide]-C-terminal glycyl-N-{[2-(4-hydroxyphenyl)ethenyl]-3-methylbutanamide} + AH2 + S-adenosyl-L-methionine = [mycofactocin precursor peptide]-C-terminal glycyl-N-{5-[(4-hydroxyphenyl)methyl]-4,4-dimethyl-2-oxopyrrolidin-3-yl}acetamide + 5'-deoxyadenosine + L-methionine + A + H(+). Its function is as follows. Radical S-adenosylmethionine (SAM) enzyme responsible for the first step of the biosynthesis of the enzyme cofactor mycofactocin (MFT). Catalyzes two reactions at the C-terminus of the mycofactocin precursor (the MftA peptide). The first one is the oxidative decarboxylation of the C-terminal L-tyrosine of MftA, forming an unsaturated tyramine moiety. The second reaction is the cross-linking of the tyramine with the penultimate L-valine residue, forming a five-membered lactam ring. Its activity requires the presence of the MftB chaperone. The protein is Mycofactocin maturase MftC (mftC) of Mycobacterium tuberculosis (strain CDC 1551 / Oshkosh).